Reading from the N-terminus, the 297-residue chain is Nitrogenase iron protein (297 aa).

Residue 11-18 (GKGGIGKS) participates in ATP binding. A [4Fe-4S] cluster-binding site is contributed by C99. Position 102 is an ADP-ribosylarginine; by dinitrogenase reductase ADP-ribosyltransferase (R102). C133 lines the [4Fe-4S] cluster pocket.

Belongs to the NifH/BchL/ChlL family. As to quaternary structure, homodimer. [4Fe-4S] cluster serves as cofactor. Post-translationally, the reversible ADP-ribosylation of Arg-102 inactivates the nitrogenase reductase and regulates nitrogenase activity.

The enzyme catalyses N2 + 8 reduced [2Fe-2S]-[ferredoxin] + 16 ATP + 16 H2O = H2 + 8 oxidized [2Fe-2S]-[ferredoxin] + 2 NH4(+) + 16 ADP + 16 phosphate + 6 H(+). The key enzymatic reactions in nitrogen fixation are catalyzed by the nitrogenase complex, which has 2 components: the iron protein and the molybdenum-iron protein. The protein is Nitrogenase iron protein of Mesorhizobium japonicum (strain LMG 29417 / CECT 9101 / MAFF 303099) (Mesorhizobium loti (strain MAFF 303099)).